The sequence spans 395 residues: Probable L-tyrosine/L-aspartate decarboxylase (395 aa).

The residue at position 242 (Lys242) is an N6-(pyridoxal phosphate)lysine.

The protein belongs to the group II decarboxylase family. MfnA subfamily. It depends on pyridoxal 5'-phosphate as a cofactor.

It catalyses the reaction L-tyrosine + H(+) = tyramine + CO2. The enzyme catalyses L-aspartate + H(+) = beta-alanine + CO2. It participates in cofactor biosynthesis; methanofuran biosynthesis. It functions in the pathway cofactor biosynthesis; coenzyme A biosynthesis. Catalyzes the decarboxylation of L-tyrosine to produce tyramine for methanofuran biosynthesis. Can also catalyze the decarboxylation of L-aspartate to produce beta-alanine for coenzyme A (CoA) biosynthesis. This is Probable L-tyrosine/L-aspartate decarboxylase from Methanosarcina acetivorans (strain ATCC 35395 / DSM 2834 / JCM 12185 / C2A).